We begin with the raw amino-acid sequence, 292 residues long: Phosphatidylglycerol--prolipoprotein diacylglyceryl transferase (292 aa).

Helical transmembrane passes span I25–A45, F70–W90, I102–A122, F138–I158, F193–F213, G217–Y237, and G255–L275. R153 lines the a 1,2-diacyl-sn-glycero-3-phospho-(1'-sn-glycerol) pocket.

The protein belongs to the Lgt family.

Its subcellular location is the cell inner membrane. The catalysed reaction is L-cysteinyl-[prolipoprotein] + a 1,2-diacyl-sn-glycero-3-phospho-(1'-sn-glycerol) = an S-1,2-diacyl-sn-glyceryl-L-cysteinyl-[prolipoprotein] + sn-glycerol 1-phosphate + H(+). It participates in protein modification; lipoprotein biosynthesis (diacylglyceryl transfer). Its function is as follows. Catalyzes the transfer of the diacylglyceryl group from phosphatidylglycerol to the sulfhydryl group of the N-terminal cysteine of a prolipoprotein, the first step in the formation of mature lipoproteins. This Bartonella tribocorum (strain CIP 105476 / IBS 506) protein is Phosphatidylglycerol--prolipoprotein diacylglyceryl transferase.